We begin with the raw amino-acid sequence, 309 residues long: Homoserine O-succinyltransferase (309 aa).

The active-site Acyl-thioester intermediate is C142. Positions 163 and 192 each coordinate substrate. H235 functions as the Proton acceptor in the catalytic mechanism. The active site involves E237. R249 is a substrate binding site.

This sequence belongs to the MetA family. Homodimer.

The protein localises to the cytoplasm. The catalysed reaction is L-homoserine + succinyl-CoA = O-succinyl-L-homoserine + CoA. It participates in amino-acid biosynthesis; L-methionine biosynthesis via de novo pathway; O-succinyl-L-homoserine from L-homoserine: step 1/1. Functionally, transfers a succinyl group from succinyl-CoA to L-homoserine, forming succinyl-L-homoserine. The chain is Homoserine O-succinyltransferase from Shigella sonnei (strain Ss046).